The chain runs to 426 residues: Histidine--tRNA ligase (426 aa).

Belongs to the class-II aminoacyl-tRNA synthetase family. As to quaternary structure, homodimer.

It is found in the cytoplasm. It carries out the reaction tRNA(His) + L-histidine + ATP = L-histidyl-tRNA(His) + AMP + diphosphate + H(+). In Streptococcus equi subsp. zooepidemicus (strain MGCS10565), this protein is Histidine--tRNA ligase.